Reading from the N-terminus, the 339-residue chain is UPF0450 protein C17orf58 (339 aa).

The N-terminal stretch at 1-17 (MTARAFWLLCLIVGSSP) is a signal peptide. Positions 17-191 (PEAPVAERKT…PQRDAEPGAE (175 aa)) are disordered. The span at 21-36 (VAERKTSPPHSRKPDS) shows a compositional bias: basic and acidic residues. Low complexity predominate over residues 56–72 (APQRPRAAEVAPAARAW). The segment covering 112–125 (ASPRREPASEDAPR) has biased composition (basic and acidic residues). Low complexity predominate over residues 132-163 (LRFPAARPPALATEGSAGHAHPNRPRAAALAP). 3 disulfide bridges follow: cysteine 193-cysteine 267, cysteine 197-cysteine 271, and cysteine 208-cysteine 338. In terms of domain architecture, NTR spans 193–338 (CARACRSDLD…QIQGAIHTQC (146 aa)).

This sequence belongs to the UPF0450 family.

In Homo sapiens (Human), this protein is UPF0450 protein C17orf58 (C17orf58).